Reading from the N-terminus, the 517-residue chain is Ribose import ATP-binding protein RbsA (517 aa).

2 consecutive ABC transporter domains span residues 11 to 251 (LEMR…VGRD) and 263 to 507 (YDPG…ALAT). Residue 43–50 (GENGAGKS) participates in ATP binding.

It belongs to the ABC transporter superfamily. Ribose importer (TC 3.A.1.2.1) family. In terms of assembly, the complex is composed of an ATP-binding protein (RbsA), two transmembrane proteins (RbsC) and a solute-binding protein (RbsB).

The protein resides in the cell inner membrane. It carries out the reaction D-ribose(out) + ATP + H2O = D-ribose(in) + ADP + phosphate + H(+). In terms of biological role, part of the ABC transporter complex RbsABC involved in ribose import. Responsible for energy coupling to the transport system. The chain is Ribose import ATP-binding protein RbsA from Burkholderia pseudomallei (strain K96243).